Here is a 508-residue protein sequence, read N- to C-terminus: Hydroxymethylglutaryl-CoA synthase, mitochondrial (508 aa).

A mitochondrion-targeting transit peptide spans 1–37 (MQRLLAPARRVLQVKRVMQESSLSPAHLLPAAQQRFS). Lys-52 is subject to N6-succinyllysine. Positions 80 and 81 each coordinate (3S)-3-hydroxy-3-methylglutaryl-CoA. An N6-acetyllysine; alternate mark is found at Lys-83 and Lys-118. 2 positions are modified to N6-succinyllysine; alternate: Lys-83 and Lys-118. Glu-132 (proton donor/acceptor) is an active-site residue. The (3S)-3-hydroxy-3-methylglutaryl-CoA site is built by Cys-166, Asn-204, and Thr-208. The active-site Acyl-thioester intermediate is the Cys-166. Lys-221 carries the post-translational modification N6-succinyllysine. N6-acetyllysine is present on Lys-243. Residue Lys-256 is modified to N6-acetyllysine; alternate. Residue Lys-256 is modified to N6-succinyllysine; alternate. 2 residues coordinate (3S)-3-hydroxy-3-methylglutaryl-CoA: Ser-258 and His-301. The active-site Proton donor/acceptor is His-301. Lys-306 carries the post-translational modification N6-acetyllysine. Lys-310 is a (3S)-3-hydroxy-3-methylglutaryl-CoA binding site. Lys-310 and Lys-327 each carry N6-acetyllysine; alternate. 2 positions are modified to N6-succinyllysine; alternate: Lys-310 and Lys-327. Lys-333 carries the N6-succinyllysine modification. N6-acetyllysine; alternate is present on residues Lys-342, Lys-350, Lys-354, and Lys-358. Residues Lys-342, Lys-350, Lys-354, and Lys-358 each carry the N6-succinyllysine; alternate modification. Asn-380 and Ser-414 together coordinate (3S)-3-hydroxy-3-methylglutaryl-CoA. Lys-427 is subject to N6-acetyllysine. The residue at position 433 (Ser-433) is a Phosphoserine. Residue Lys-437 is modified to N6-acetyllysine. Ser-440 carries the phosphoserine modification. Lys-447 carries the post-translational modification N6-acetyllysine; alternate. N6-succinyllysine; alternate is present on Lys-447. A Phosphoserine modification is found at Ser-456. Lys-473 carries the post-translational modification N6-acetyllysine; alternate. Position 473 is an N6-succinyllysine; alternate (Lys-473). The residue at position 477 (Ser-477) is a Phosphoserine.

Belongs to the thiolase-like superfamily. HMG-CoA synthase family. As to quaternary structure, homodimer. In terms of processing, succinylated. Desuccinylated by SIRT5. Succinylation, at least at Lys-83 and Lys-310, inhibits the enzymatic activity. Liver and kidney.

Its subcellular location is the mitochondrion. It carries out the reaction acetoacetyl-CoA + acetyl-CoA + H2O = (3S)-3-hydroxy-3-methylglutaryl-CoA + CoA + H(+). Its pathway is metabolic intermediate biosynthesis; (R)-mevalonate biosynthesis; (R)-mevalonate from acetyl-CoA: step 2/3. In terms of biological role, catalyzes the first irreversible step in ketogenesis, condensing acetyl-CoA to acetoacetyl-CoA to form HMG-CoA, which is converted by HMG-CoA reductase (HMGCR) into mevalonate. This is Hydroxymethylglutaryl-CoA synthase, mitochondrial (Hmgcs2) from Rattus norvegicus (Rat).